The chain runs to 185 residues: ATP-dependent protease subunit HslV (185 aa).

Thr12 is a catalytic residue. Na(+) is bound by residues Ala168, Cys171, and Thr174.

The protein belongs to the peptidase T1B family. HslV subfamily. A double ring-shaped homohexamer of HslV is capped on each side by a ring-shaped HslU homohexamer. The assembly of the HslU/HslV complex is dependent on binding of ATP.

It is found in the cytoplasm. It catalyses the reaction ATP-dependent cleavage of peptide bonds with broad specificity.. Allosterically activated by HslU binding. Functionally, protease subunit of a proteasome-like degradation complex believed to be a general protein degrading machinery. This is ATP-dependent protease subunit HslV from Dinoroseobacter shibae (strain DSM 16493 / NCIMB 14021 / DFL 12).